We begin with the raw amino-acid sequence, 524 residues long: Tubulin-specific chaperone E (524 aa).

Ser2 is subject to N-acetylserine. The CAP-Gly domain occupies 27–71; sequence GAVPPVAGLWLGVEWDNPERGKHDGSHEGTMYFKCRHPTGGSFVR. LRR repeat units lie at residues 154 to 175, 180 to 201, 206 to 227, 231 to 253, 254 to 275, 279 to 300, and 309 to 330; these read NIRV…VLIA, DLEA…PTLT, TLKT…HCAP, VLEE…NVLQ, KMRL…SLIA, RLEH…DAEI, and ALKY…NELD. Residues 343-381 form the LRRCT domain; sequence NPLSKADKAEEIIIAKIAQLRTLNRCQILPEERRGAELD. Residue Lys460 is modified to N6-acetyllysine. A Phosphoserine modification is found at Ser492.

It belongs to the TBCE family. In terms of assembly, supercomplex made of cofactors A to E. Cofactors A and D function by capturing and stabilizing tubulin in a quasi-native conformation. Cofactor E binds to the cofactor D-tubulin complex; interaction with cofactor C then causes the release of tubulin polypeptides that are committed to the native state. Cofactors B and E can form a heterodimer which binds to alpha-tubulin and enhances their ability to dissociate tubulin heterodimers. Interacts with TBCD. As to expression, ubiquitously expressed.

It localises to the cytoplasm. The protein localises to the cytoskeleton. Its function is as follows. Tubulin-folding protein; involved in the second step of the tubulin folding pathway and in the regulation of tubulin heterodimer dissociation. Required for correct organization of microtubule cytoskeleton and mitotic splindle, and maintenance of the neuronal microtubule network. The polypeptide is Tubulin-specific chaperone E (Tbce) (Mus musculus (Mouse)).